A 257-amino-acid chain; its full sequence is Type III pantothenate kinase (257 aa).

6–13 (DVGNTNTV) lines the ATP pocket. Residues Tyr-102 and 109-112 (GADR) each bind substrate. Asp-111 acts as the Proton acceptor in catalysis. Asp-131 serves as a coordination point for K(+). An ATP-binding site is contributed by Thr-134. Thr-186 contributes to the substrate binding site.

This sequence belongs to the type III pantothenate kinase family. Homodimer. NH4(+) serves as cofactor. It depends on K(+) as a cofactor.

It localises to the cytoplasm. It catalyses the reaction (R)-pantothenate + ATP = (R)-4'-phosphopantothenate + ADP + H(+). It participates in cofactor biosynthesis; coenzyme A biosynthesis; CoA from (R)-pantothenate: step 1/5. Catalyzes the phosphorylation of pantothenate (Pan), the first step in CoA biosynthesis. In Leptospira interrogans serogroup Icterohaemorrhagiae serovar copenhageni (strain Fiocruz L1-130), this protein is Type III pantothenate kinase.